We begin with the raw amino-acid sequence, 782 residues long: uncharacterized protein (782 aa).

Disordered stretches follow at residues 1 to 25 (MFSPSKFRKQVNESESVSNCESTTS) and 175 to 195 (RPRTSPYKRAGDASMSREDLR). A compositionally biased stretch (low complexity) spans 13–25 (ESESVSNCESTTS). Basic and acidic residues predominate over residues 183–195 (RAGDASMSREDLR). Coiled-coil stretches lie at residues 223 to 331 (RENR…STLN), 348 to 398 (LSQF…VSTL), 428 to 601 (NRIN…QLLN), and 699 to 743 (TIET…IIAK). Positions 748-782 (NIPKTEKSSPMKKVPPIENFRAKSQTSITGLSPVL) are disordered. Positions 769–782 (AKSQTSITGLSPVL) are enriched in polar residues.

This is an uncharacterized protein from Caenorhabditis elegans.